Reading from the N-terminus, the 212-residue chain is Golgi-associated RAB2 interactor protein 5A (212 aa).

2 disordered regions span residues 1–21 and 162–212; these read MKGGRDLKAARGGADRPLAPA and PFTH…LWGL. Residues 169–185 are compositionally biased toward acidic residues; the sequence is APEEEEEEEEEEEEEEV.

This sequence belongs to the GARIN family. As to quaternary structure, interacts (via N-terminus) with RAB2B (in GTP-bound form). Expressed in testis (at protein level).

It is found in the golgi apparatus. Functionally, RAB2B effector protein which promotes cytosolic DNA-induced innate immune responses. Regulates IFN responses against DNA viruses by regulating the CGAS-STING signaling axis. The sequence is that of Golgi-associated RAB2 interactor protein 5A from Mus musculus (Mouse).